We begin with the raw amino-acid sequence, 1411 residues long: MKSLLDLFKQFTPDEHFDAIRIGMASPEKIRSWSFGEVKKPETINYRTFKPERDGLFCAKIFGPIKDYECLCGKYKRLKHRGVICEKCGVEVTQTKVRRERMGHIDLAAPCAHIWFLKSLPSRLGLVLDMTLRDIERVLYFEAYVVTDPGMTPLKKFGIMSEDDHDAKRKEYGDEFIAKMGAEGIKDLLEGIDIDLEIEKLRGDLTGSEVKVKKNAKRLKVLEAFKKSGIKPEWMVLDVLPVLPPDLRPLVPLDGGRFATSDLNDLYRRVINRNSRLRRLLELKAPEIIARNEKRMLQEAVDSLLDNGRRGKAMTGANKRALKSLADMIKGKSGRFRQNLLGKRVDYSGRSVITVGPTLKLHQCGLPKLMALELFKPFIFSRLEQMGIATTIKAAKKEVESGTPVVWDILEEVIKEHPVMLNRAPTLHRLGIQAFEPILIEGKAIQLHPLVCAAFNADFDGDQMAVHVPLSVEAQMEARTLMLASNNVLFPASGEPSIVPSQDVVLGLYHATRDKINGKGEGLVFADTGEVQRALDAGQVELHAKISVRLTEWTKDKASGEFVPSTSLVDTTVGRALLSEILPKGLPFSNINKALKKKEISKLINVSFRKCGLKETVVFADKLLQNGFRLATRAGFSVAIDDMLVPPQKTEILARAEAEVKEIEQQYVSGLVTAGERYNKVVDIWGKAGDDVSKVMMDQLKVEKTTDRHGKEVNQESFNAIYMMADSGARGSAAQIRQLAGMRGLMAKPDGSIIETPITANFREGLNVLQYFISTHGARKGLADTALKTANSGYLTRRLVDVTQDLVVTEEDCGTTNGSVMRAIVEGGEVIESLRERVLGRSTAEEVLHPETRAVLVPAGQMLDEDTLEELEAAGVDEVKVRTALTCETRYGLCAKCYGRDLGRGGLINLGEAVGVIAAQSIGEPGTQLTMRTFHIGGAASRAAIASTVEAKSNGVIGFNATMRYVTNSKGELVVIARSGEVIIQDEHGRERERHKVPYGATLTVKADQQVKAGTILANWDPLTRPIITEFAGQVKFENIEEGLTVAKQVDDVTGLSTLVVIDPKRRGSAKVVRPQVKLVDANGAEVKIPGTDHSVTIGFQVGALIQVRDGQDVGPGEVLARIPVEGQKTRDITGGLPRVAELFEARSPKDKGMLAEITGTVSFGKETKGKVRLQITDPDGKVWDELVPKEKNVLVHEGQVVNKGELIVDGPADPQDILRLLGIEELSRYIVDEVQDVYRLQGVKINDKHIEVIVRQMLRRVVVENPGESGYIAGEQVERSEILNTNEQLQSEGKIPATYSNVLLGITKASLSTDSFISAASFQETTRVLTEAAIMGKRDELRGLKENVIVGRLIPAGTGLAYHQARKAKEAMDDAERRAIAEAEAAEMATTGSDEAPEVEGSGVESGSAE.

Positions 70, 72, 85, and 88 each coordinate Zn(2+). Residues aspartate 458, aspartate 460, and aspartate 462 each coordinate Mg(2+). Zn(2+) contacts are provided by cysteine 813, cysteine 887, cysteine 894, and cysteine 897. Positions 1384 to 1411 (AEAAEMATTGSDEAPEVEGSGVESGSAE) are disordered.

It belongs to the RNA polymerase beta' chain family. In terms of assembly, the RNAP catalytic core consists of 2 alpha, 1 beta, 1 beta' and 1 omega subunit. When a sigma factor is associated with the core the holoenzyme is formed, which can initiate transcription. Mg(2+) serves as cofactor. Requires Zn(2+) as cofactor.

The enzyme catalyses RNA(n) + a ribonucleoside 5'-triphosphate = RNA(n+1) + diphosphate. In terms of biological role, DNA-dependent RNA polymerase catalyzes the transcription of DNA into RNA using the four ribonucleoside triphosphates as substrates. The polypeptide is DNA-directed RNA polymerase subunit beta' (Paracidovorax citrulli (strain AAC00-1) (Acidovorax citrulli)).